Here is a 106-residue protein sequence, read N- to C-terminus: UPF0145 protein Tpet_0165 (106 aa).

Belongs to the UPF0145 family.

This chain is UPF0145 protein Tpet_0165, found in Thermotoga petrophila (strain ATCC BAA-488 / DSM 13995 / JCM 10881 / RKU-1).